The primary structure comprises 667 residues: Transketolase (667 aa).

Histidine 27 lines the substrate pocket. Thiamine diphosphate is bound by residues histidine 67 and 115 to 117 (GPL). Aspartate 156 contributes to the Mg(2+) binding site. Residues glycine 157 and asparagine 186 each contribute to the thiamine diphosphate site. Asparagine 186 and isoleucine 188 together coordinate Mg(2+). 3 residues coordinate substrate: histidine 262, arginine 357, and serine 384. Histidine 262 serves as a coordination point for thiamine diphosphate. Residue glutamate 411 is the Proton donor of the active site. Phenylalanine 437 is a binding site for thiamine diphosphate. Positions 461, 469, and 520 each coordinate substrate.

It belongs to the transketolase family. In terms of assembly, homodimer. Requires Mg(2+) as cofactor. Ca(2+) serves as cofactor. The cofactor is Mn(2+). It depends on Co(2+) as a cofactor. Thiamine diphosphate is required as a cofactor.

It catalyses the reaction D-sedoheptulose 7-phosphate + D-glyceraldehyde 3-phosphate = aldehydo-D-ribose 5-phosphate + D-xylulose 5-phosphate. In terms of biological role, catalyzes the transfer of a two-carbon ketol group from a ketose donor to an aldose acceptor, via a covalent intermediate with the cofactor thiamine pyrophosphate. The chain is Transketolase (tkt) from Bacillus subtilis (strain 168).